Here is a 336-residue protein sequence, read N- to C-terminus: Biotin synthase (336 aa).

The Radical SAM core domain occupies 54–281 (NAIQLSTLLS…KAMVRLSAGR (228 aa)). Positions 69, 73, and 76 each coordinate [4Fe-4S] cluster. C113, C144, C204, and R276 together coordinate [2Fe-2S] cluster.

Belongs to the radical SAM superfamily. Biotin synthase family. As to quaternary structure, homodimer. [4Fe-4S] cluster serves as cofactor. It depends on [2Fe-2S] cluster as a cofactor.

It carries out the reaction (4R,5S)-dethiobiotin + (sulfur carrier)-SH + 2 reduced [2Fe-2S]-[ferredoxin] + 2 S-adenosyl-L-methionine = (sulfur carrier)-H + biotin + 2 5'-deoxyadenosine + 2 L-methionine + 2 oxidized [2Fe-2S]-[ferredoxin]. Its pathway is cofactor biosynthesis; biotin biosynthesis; biotin from 7,8-diaminononanoate: step 2/2. Functionally, catalyzes the conversion of dethiobiotin (DTB) to biotin by the insertion of a sulfur atom into dethiobiotin via a radical-based mechanism. The polypeptide is Biotin synthase (Burkholderia thailandensis (strain ATCC 700388 / DSM 13276 / CCUG 48851 / CIP 106301 / E264)).